The sequence spans 341 residues: MSLAGGDRPIRVLVADDSELFRELLARVVAAEPGFEVAAVAADGDAAAAMARALRPDVVTMDLHMPDADGYSGIARIMAETPTPILVLTANPTEAAGFRALSLGALDILEKPSATADLGEYGRLIRSRLRLLAGVKVIRHLRGLRERRDAAPARAARVEVVVIGASLGGPRALAAVLRGLPPDFPAPIAVVQHIADGFTAGLAGWLAQESRLDVREARHGDPLRAGRVLIAPSGRHLVLGEGVARLSDAPPVDTFRPSVTPLFTSAARQYGRRCCGVLLTGMGRDGAEGLRVIKDAGGPTLAQDEATSAVFGMARAAVELGAVDRVLPVDEIPRALRELTR.

Residues 11–126 (RVLVADDSEL…DLGEYGRLIR (116 aa)) enclose the Response regulatory domain. The residue at position 62 (aspartate 62) is a 4-aspartylphosphate. One can recognise a CheB-type methylesterase domain in the interval 152–341 (PARAARVEVV…IPRALRELTR (190 aa)). Active-site residues include serine 166, histidine 193, and aspartate 285.

Belongs to the CheB family. In terms of processing, phosphorylated by CheA. Phosphorylation of the N-terminal regulatory domain activates the methylesterase activity.

It is found in the cytoplasm. The catalysed reaction is [protein]-L-glutamate 5-O-methyl ester + H2O = L-glutamyl-[protein] + methanol + H(+). It catalyses the reaction L-glutaminyl-[protein] + H2O = L-glutamyl-[protein] + NH4(+). In terms of biological role, involved in chemotaxis. Part of a chemotaxis signal transduction system that modulates chemotaxis in response to various stimuli. Catalyzes the demethylation of specific methylglutamate residues introduced into the chemoreceptors (methyl-accepting chemotaxis proteins or MCP) by CheR. Also mediates the irreversible deamidation of specific glutamine residues to glutamic acid. In Anaeromyxobacter dehalogenans (strain 2CP-C), this protein is Protein-glutamate methylesterase/protein-glutamine glutaminase 2.